The primary structure comprises 271 residues: S-adenosylmethionine decarboxylase proenzyme (271 aa).

Ser121 (schiff-base intermediate with substrate; via pyruvic acid) is an active-site residue. Ser121 is subject to Pyruvic acid (Ser); by autocatalysis. Residue His126 is the Proton acceptor; for processing activity of the active site. The active-site Proton donor; for catalytic activity is Cys149.

Belongs to the prokaryotic AdoMetDC family. Type 2 subfamily. Heterooctamer of four alpha and four beta chains arranged as a tetramer of alpha/beta heterodimers. The cofactor is pyruvate. Post-translationally, is synthesized initially as an inactive proenzyme. Formation of the active enzyme involves a self-maturation process in which the active site pyruvoyl group is generated from an internal serine residue via an autocatalytic post-translational modification. Two non-identical subunits are generated from the proenzyme in this reaction, and the pyruvate is formed at the N-terminus of the alpha chain, which is derived from the carboxyl end of the proenzyme. The post-translation cleavage follows an unusual pathway, termed non-hydrolytic serinolysis, in which the side chain hydroxyl group of the serine supplies its oxygen atom to form the C-terminus of the beta chain, while the remainder of the serine residue undergoes an oxidative deamination to produce ammonia and the pyruvoyl group blocking the N-terminus of the alpha chain.

It catalyses the reaction S-adenosyl-L-methionine + H(+) = S-adenosyl 3-(methylsulfanyl)propylamine + CO2. The protein operates within amine and polyamine biosynthesis; S-adenosylmethioninamine biosynthesis; S-adenosylmethioninamine from S-adenosyl-L-methionine: step 1/1. In terms of biological role, catalyzes the decarboxylation of S-adenosylmethionine to S-adenosylmethioninamine (dcAdoMet), the propylamine donor required for the synthesis of the polyamines spermine and spermidine from the diamine putrescine. The polypeptide is S-adenosylmethionine decarboxylase proenzyme (Clostridium beijerinckii (strain ATCC 51743 / NCIMB 8052) (Clostridium acetobutylicum)).